The chain runs to 867 residues: DNA replication licensing factor mcm6 (867 aa).

Residues isoleucine 51–asparagine 76 are disordered. The segment covering glutamate 61–glutamate 75 has biased composition (acidic residues). The 207-residue stretch at isoleucine 420–isoleucine 626 folds into the MCM domain. Residues serine 473, threonine 474, lysine 476, serine 477, and asparagine 578 each coordinate ATP. The Arginine finger motif lies at serine 602–aspartate 605. ADP contacts are provided by arginine 693 and glutamate 696.

It belongs to the MCM family. As to quaternary structure, component of the MCM2-7 complex. The complex forms a toroidal hexameric ring with the proposed subunit order MCM2-MCM6-MCM4-MCM7-MCM3-MCM5 (By simililarity).

The protein resides in the nucleus. It catalyses the reaction ATP + H2O = ADP + phosphate + H(+). Functionally, acts as a component of the MCM2-7 complex (MCM complex) which is the replicative helicase essential for 'once per cell cycle' DNA replication initiation and elongation in eukaryotic cells. Core component of CDC45-MCM-GINS (CMG) helicase, the molecular machine that unwinds template DNA during replication, and around which the replisome is built. The active ATPase sites in the MCM2-7 ring are formed through the interaction surfaces of two neighboring subunits such that a critical structure of a conserved arginine finger motif is provided in trans relative to the ATP-binding site of the Walker A box of the adjacent subunit. The six ATPase active sites, however, are likely to contribute differentially to the complex helicase activity. The polypeptide is DNA replication licensing factor mcm6 (mcm6) (Dictyostelium discoideum (Social amoeba)).